We begin with the raw amino-acid sequence, 902 residues long: Protein translocase subunit SecA (902 aa).

ATP contacts are provided by residues Gln-87, 105–109 (GEGKT), and Asp-512. Disordered stretches follow at residues 565–584 (RRID…PGSS) and 840–902 (VEEQ…GKLK). 2 stretches are compositionally biased toward basic and acidic residues: residues 840 to 859 (VEEQ…HEDA) and 873 to 882 (QVREGAKVGR). Residues Cys-886, Cys-888, Cys-897, and His-898 each coordinate Zn(2+). Residues 892–902 (KKYKQCHGKLK) show a composition bias toward basic residues.

It belongs to the SecA family. As to quaternary structure, monomer and homodimer. Part of the essential Sec protein translocation apparatus which comprises SecA, SecYEG and auxiliary proteins SecDF-YajC and YidC. Zn(2+) serves as cofactor.

Its subcellular location is the cell inner membrane. The protein localises to the cytoplasm. It catalyses the reaction ATP + H2O + cellular proteinSide 1 = ADP + phosphate + cellular proteinSide 2.. Functionally, part of the Sec protein translocase complex. Interacts with the SecYEG preprotein conducting channel. Has a central role in coupling the hydrolysis of ATP to the transfer of proteins into and across the cell membrane, serving both as a receptor for the preprotein-SecB complex and as an ATP-driven molecular motor driving the stepwise translocation of polypeptide chains across the membrane. The polypeptide is Protein translocase subunit SecA (Alteromonas mediterranea (strain DSM 17117 / CIP 110805 / LMG 28347 / Deep ecotype)).